An 83-amino-acid polypeptide reads, in one-letter code: Gas vesicle protein G1 (83 aa).

This sequence belongs to the gas vesicle GvpG family. As to quaternary structure, gvpF to GvpM interact with each other in vitro, and may form multi-subunit complex(es). Might interact with GvpA1.

The protein resides in the gas vesicle. Functionally, proteins GvpF to GvpM might be involved in nucleating gas vesicle formation. A minor component of the gas vesicle. Gas vesicles are hollow, gas filled proteinaceous nanostructures found in several microbial planktonic microorganisms. They allow positioning of halobacteria at the optimal depth for growth in the poorly aerated, shallow brine pools of their habitat. Its function is as follows. Expression of a 9.5 kb p-vac DNA fragment containing 2 divergently transcribed regions (gvpD-gvpE-gvpF-gvpG-gvpH-gvpI-gvpJ-gvpK-gvpL-gvpM and gvpA-gvpC-gvpN-gvpO) allows H.volcanii to produce gas vesicles. A minimal gas vesicle can be made in H.volcanii by gvpA1-gvpO1 plus gvpF1-gvpG1-gvpJ1-gvpK1-gvpL1-gvpM1; lack of enough GvpJ1 prevents formation. A similar region restores gas vesicle production in H.halobium without the p-vac locus, but it still has the c-vac locus. This is Gas vesicle protein G1 (gvpG11) from Halobacterium salinarum (strain ATCC 700922 / JCM 11081 / NRC-1) (Halobacterium halobium).